A 143-amino-acid chain; its full sequence is Transcriptional regulator MraZ (143 aa).

2 SpoVT-AbrB domains span residues 5–47 and 76–119; these read EYHH…PIEE and AMES…SAER.

This sequence belongs to the MraZ family. In terms of assembly, forms oligomers.

Its subcellular location is the cytoplasm. It localises to the nucleoid. In Lactobacillus gasseri (strain ATCC 33323 / DSM 20243 / BCRC 14619 / CIP 102991 / JCM 1131 / KCTC 3163 / NCIMB 11718 / NCTC 13722 / AM63), this protein is Transcriptional regulator MraZ.